The primary structure comprises 520 residues: NADH-quinone oxidoreductase subunit N (520 aa).

Transmembrane regions (helical) follow at residues 13–33, 55–75, 87–107, 115–135, 141–161, 176–196, 219–239, 250–270, 285–305, 313–333, 339–359, 383–403, 425–445, and 468–488; these read ALLP…ASVW, FGVI…GDGA, GFRW…LMLL, AAFG…MMVL, LMFV…LAGV, FLLG…LFGA, FMSG…AAPF, APLP…FAVF, WHMG…VFAL, MLAY…IVGD, ALIF…GVLI, WLAI…VLGG, ILAV…LAVV, and SLIA…TPIM. The segment covering 494–508 has biased composition (low complexity); that stretch reads ATTTTSPTSNPAAPR. Residues 494–520 form a disordered region; sequence ATTTTSPTSNPAAPRGEVRLQTASVPR.

Belongs to the complex I subunit 2 family. In terms of assembly, NDH-1 is composed of 14 different subunits. Subunits NuoA, H, J, K, L, M, N constitute the membrane sector of the complex.

The protein resides in the cell inner membrane. It catalyses the reaction a quinone + NADH + 5 H(+)(in) = a quinol + NAD(+) + 4 H(+)(out). NDH-1 shuttles electrons from NADH, via FMN and iron-sulfur (Fe-S) centers, to quinones in the respiratory chain. The immediate electron acceptor for the enzyme in this species is believed to be ubiquinone. Couples the redox reaction to proton translocation (for every two electrons transferred, four hydrogen ions are translocated across the cytoplasmic membrane), and thus conserves the redox energy in a proton gradient. The sequence is that of NADH-quinone oxidoreductase subunit N from Gemmatimonas aurantiaca (strain DSM 14586 / JCM 11422 / NBRC 100505 / T-27).